The primary structure comprises 507 residues: Maturase K (507 aa).

The protein belongs to the intron maturase 2 family. MatK subfamily.

The protein localises to the plastid. It localises to the chloroplast. Functionally, usually encoded in the trnK tRNA gene intron. Probably assists in splicing its own and other chloroplast group II introns. The protein is Maturase K of Liriodendron chinense (Chinese tulip tree).